The sequence spans 651 residues: Chaperone protein HtpG (651 aa).

The a; substrate-binding stretch occupies residues 1-353 (MAAHVEQLEF…AQDMSLNVSR (353 aa)). The b stretch occupies residues 354-569 (EILQQDRQIR…TFGITPALAR (216 aa)). Positions 570 to 651 (MYRASGQPVP…RLTRTVGDQT (82 aa)) are c.

The protein belongs to the heat shock protein 90 family. As to quaternary structure, homodimer.

Its subcellular location is the cytoplasm. Molecular chaperone. Has ATPase activity. This chain is Chaperone protein HtpG, found in Mycolicibacterium vanbaalenii (strain DSM 7251 / JCM 13017 / BCRC 16820 / KCTC 9966 / NRRL B-24157 / PYR-1) (Mycobacterium vanbaalenii).